A 567-amino-acid chain; its full sequence is Zinc finger protein 512 (567 aa).

A disordered region spans residues Met1–Gln34. Glycyl lysine isopeptide (Lys-Gly) (interchain with G-Cter in SUMO2) cross-links involve residues Lys18 and Lys84. The interval Ala87–Pro148 is disordered. The segment covering Lys119–Pro130 has biased composition (basic residues). The C2H2-type 1 zinc finger occupies Phe197–His220. Lys227 participates in a covalent cross-link: Glycyl lysine isopeptide (Lys-Gly) (interchain with G-Cter in SUMO2). Residues Leu287–His310 form a C2H2-type 2 zinc finger. A Glycyl lysine isopeptide (Lys-Gly) (interchain with G-Cter in SUMO2) cross-link involves residue Lys333. The segment at Ile406–Cys430 adopts a C2H2-type 3; atypical zinc-finger fold. The C2H2-type 3 zinc finger occupies Tyr440–His463. Positions Lys485–Arg494 are enriched in basic and acidic residues. The segment at Lys485–Lys567 is disordered. The segment covering Arg495 to Gln508 has biased composition (basic residues). Residues Val523 to Glu544 show a composition bias toward basic and acidic residues. Positions Arg556 to Lys567 are enriched in basic residues.

This sequence belongs to the krueppel C2H2-type zinc-finger protein family.

Its subcellular location is the nucleus. In terms of biological role, may be involved in transcriptional regulation. The protein is Zinc finger protein 512 (ZNF512) of Bos taurus (Bovine).